Here is a 1325-residue protein sequence, read N- to C-terminus: Clustered mitochondria protein homolog (1325 aa).

One can recognise a Clu domain in the interval 311-573; it reads PKHESDPMRT…RHTPMDVTWL (263 aa). Disordered regions lie at residues 893-937, 1032-1063, and 1245-1325; these read KHAE…PLRT, DSNQ…DDQL, and QHAR…AKRS. Residues 1265-1275 are compositionally biased toward basic residues; it reads SAHHHHHRHLH. Residues 1276-1285 show a composition bias toward low complexity; it reads QQQQNSSSSP. A compositionally biased stretch (basic residues) spans 1314–1325; the sequence is AARKRAARAKRS.

It belongs to the CLU family. As to quaternary structure, may associate with the eukaryotic translation initiation factor 3 (eIF-3) complex.

It is found in the cytoplasm. In terms of biological role, mRNA-binding protein involved in proper cytoplasmic distribution of mitochondria. This Malassezia globosa (strain ATCC MYA-4612 / CBS 7966) (Dandruff-associated fungus) protein is Clustered mitochondria protein homolog.